The chain runs to 222 residues: Superoxide dismutase [Mn], mitochondrial (222 aa).

The transit peptide at 1–24 (MLSRAVCGTGRQLAPALGYLGSRQ) directs the protein to the mitochondrion. His-50 is a Mn(2+) binding site. Tyr-58 carries the 3'-nitrotyrosine modification. An N6-acetyllysine; alternate mark is found at Lys-68 and Lys-75. N6-succinyllysine; alternate occurs at positions 68 and 75. Residue His-98 participates in Mn(2+) binding. Position 114 is an N6-acetyllysine (Lys-114). N6-acetyllysine; alternate occurs at positions 122 and 130. An N6-succinyllysine; alternate mark is found at Lys-122 and Lys-130. Asp-183 and His-187 together coordinate Mn(2+). Lys-202 bears the N6-acetyllysine mark.

This sequence belongs to the iron/manganese superoxide dismutase family. As to quaternary structure, homotetramer. Mn(2+) is required as a cofactor. Post-translationally, nitrated under oxidative stress. Nitration coupled with oxidation inhibits the catalytic activity. In terms of processing, acetylation at Lys-122 decreases enzymatic activity. Deacetylated by SIRT3 upon exposure to ionizing radiations or after long fasting. Polyubiquitinated; leading to proteasomal degradation. Deubiquitinated by USP36 which increases protein stability.

Its subcellular location is the mitochondrion matrix. It catalyses the reaction 2 superoxide + 2 H(+) = H2O2 + O2. Functionally, destroys superoxide anion radicals which are normally produced within the cells and which are toxic to biological systems. This Macaca nemestrina (Pig-tailed macaque) protein is Superoxide dismutase [Mn], mitochondrial (SOD2).